An 889-amino-acid chain; its full sequence is Cytoplasmic aconitate hydratase (889 aa).

Substrate-binding positions include Q86 and D205–H207. Residues C437, C503, and C506 each coordinate [4Fe-4S] cluster. Residues R536, R541, R699, and S779–R780 each bind substrate.

Belongs to the aconitase/IPM isomerase family. As to quaternary structure, interacts (when associated with the 4Fe-4S) with FBXL5. Interacts with frataxin(81-210). [4Fe-4S] cluster serves as cofactor.

It is found in the cytoplasm. The protein resides in the cytosol. It carries out the reaction citrate = D-threo-isocitrate. Bifunctional iron sensor that switches between 2 activities depending on iron availability. Iron deprivation, promotes its mRNA binding activity through which it regulates the expression of genes involved in iron uptake, sequestration and utilization. Binds to iron-responsive elements (IRES) in the untranslated region of target mRNAs preventing for instance the translation of ferritin and aminolevulinic acid synthase and stabilizing the transferrin receptor mRNA. In terms of biological role, conversely, when cellular iron levels are high, binds a 4Fe-4S cluster which precludes RNA binding activity and promotes the aconitase activity, the isomerization of citrate to isocitrate via cis-aconitate. The sequence is that of Cytoplasmic aconitate hydratase (Aco1) from Rattus norvegicus (Rat).